A 410-amino-acid chain; its full sequence is Sprouty-related, EVH1 domain-containing protein 3 (410 aa).

Positions 1–113 (MVRVRAVVMA…KSLLAALAAL (113 aa)) constitute a WH1 domain. The disordered stretch occupies residues 117–210 (SLTPSSSSSS…PEPSEPLAGA (94 aa)). Low complexity-rich tracts occupy residues 120 to 130 (PSSSSSSSSPS) and 147 to 165 (DSSS…AAAP). The 50-residue stretch at 195 to 244 (LPFTGIPEPSEPLAGAGGLGWGGRGYEDYRRSGPPAPLALSTCVVRFAKT) folds into the KBD domain. An Asymmetric dimethylarginine modification is found at Arg240. Arg248 is modified (omega-N-methylarginine). Residues 258-288 (LPAPLTEAAPPAPPARPPPGPGPSSAPAKAS) are disordered. A compositionally biased stretch (pro residues) spans 267–281 (PPAPPARPPPGPGPS). The 112-residue stretch at 296–407 (RCVHCRALFR…CAGCGGRHEE (112 aa)) folds into the SPR domain.

Interacts with palmitoyltransferase ZDHHC17/HIP14; the interaction leads to palmitoylation of SPRED3. Phosphorylated on tyrosine. Post-translationally, palmitoylated by ZDHHC17/HIP14. In terms of processing, ubiquitinated.

It is found in the cell membrane. Tyrosine kinase substrate that inhibits growth-factor-mediated activation of MAP kinase. Inhibits fibroblast growth factor (FGF)-induced retinal lens fiber differentiation, probably by inhibiting FGF-mediated phosphorylation of ERK1/2. Inhibits TGFB-induced epithelial-to-mesenchymal transition in lens epithelial cells. The chain is Sprouty-related, EVH1 domain-containing protein 3 (SPRED3) from Homo sapiens (Human).